Consider the following 456-residue polypeptide: Glycine receptor subunit alpha-4 (456 aa).

The N-terminal stretch at M1–A27 is a signal peptide. The Extracellular portion of the chain corresponds to K28–Y256. Residue N71 is glycosylated (N-linked (GlcNAc...) asparagine). Intrachain disulfides connect C171–C185 and C232–C243. Y236–F241 lines the strychnine pocket. A helical membrane pass occupies residues Y257–I278. Over N279 to A283 the chain is Cytoplasmic. The helical transmembrane segment at P284–S304 threads the bilayer. Over R305–K315 the chain is Extracellular. A helical membrane pass occupies residues A316–A336. Residues A337 to T423 are Cytoplasmic-facing. A helical membrane pass occupies residues I424 to Y444. Over K445–L456 the chain is Extracellular.

It belongs to the ligand-gated ion channel (TC 1.A.9) family. Glycine receptor (TC 1.A.9.3) subfamily. GLRA4 sub-subfamily. As to quaternary structure, homopentamer (in vitro). Heteropentamer composed of GLRA4 and GLRB. Detected in the retina inner plexiform layer, especially at the border between layer three and four (at protein level).

The protein localises to the postsynaptic cell membrane. It localises to the synapse. It is found in the perikaryon. The protein resides in the cell projection. Its subcellular location is the dendrite. The protein localises to the cell membrane. It catalyses the reaction chloride(in) = chloride(out). Inhibited by strychnine. Glycine receptors are ligand-gated chloride channels. Channel opening is triggered by extracellular glycine. Channel opening is also triggered by taurine and beta-alanine. Plays a role in the down-regulation of neuronal excitability. Contributes to the generation of inhibitory postsynaptic currents. The sequence is that of Glycine receptor subunit alpha-4 (Glra4) from Mus musculus (Mouse).